Consider the following 854-residue polypeptide: Patatin-like phospholipase domain-containing protein CHGG_02900 (854 aa).

3 disordered regions span residues 1–29 (MAGPGYDRVDSKDDEPPNIQIPSRTYGFP), 58–138 (LSAP…PPLS), and 159–186 (QRRVARAKTAPQSSSRNDKKKKRARSKD). Basic and acidic residues predominate over residues 96 to 116 (DLARRPESSGVGFHDEDRTAR). Residues 119 to 132 (PAGAATAAAAGVAT) show a composition bias toward low complexity. Residues 199–219 (WPLLGVVTCWLVGLSVVHVLA) traverse the membrane as a helical segment. A PNPLA domain is found at 387–578 (LCLSGGATFA…RTDIPIKALN (192 aa)). Positions 418-422 (GTSGG) match the GXSXG motif. S420 functions as the Nucleophile in the catalytic mechanism. Residue D565 is the Proton acceptor of the active site. Disordered stretches follow at residues 724–776 (RENR…SILS) and 791–830 (RGGIGSGETESEDETSDLDADFYEGITYDGGDDDAGLEFG). The segment covering 729–751 (GGGLGDGGVGSSGGAGGGAGGGQ) has biased composition (gly residues). Residues 752 to 761 (AEAVAGQAAG) show a composition bias toward low complexity. Over residues 799–812 (TESEDETSDLDADF) the composition is skewed to acidic residues.

It belongs to the PLPL family.

Its subcellular location is the membrane. Functionally, probable lipid hydrolase. The chain is Patatin-like phospholipase domain-containing protein CHGG_02900 from Chaetomium globosum (strain ATCC 6205 / CBS 148.51 / DSM 1962 / NBRC 6347 / NRRL 1970) (Soil fungus).